The sequence spans 252 residues: Flap endonuclease Xni (252 aa).

Position 103 (aspartate 103) interacts with Mg(2+). The region spanning 159-248 is the 5'-3' exonuclease domain; the sequence is VLPEQLPDYW…LKGNLQQLRL (90 aa). Residues leucine 170, alanine 171, proline 179, isoleucine 181, and isoleucine 184 each contribute to the K(+) site. The interaction with DNA stretch occupies residues 183-188; the sequence is GIGPKT.

This sequence belongs to the Xni family. Requires Mg(2+) as cofactor. The cofactor is K(+).

Has flap endonuclease activity. During DNA replication, flap endonucleases cleave the 5'-overhanging flap structure that is generated by displacement synthesis when DNA polymerase encounters the 5'-end of a downstream Okazaki fragment. In Photorhabdus laumondii subsp. laumondii (strain DSM 15139 / CIP 105565 / TT01) (Photorhabdus luminescens subsp. laumondii), this protein is Flap endonuclease Xni.